The following is a 244-amino-acid chain: Orotidine 5'-phosphate decarboxylase (244 aa).

Substrate is bound by residues Asp12, Lys34, 61 to 70 (DLKLFDIPNT), Thr125, Arg187, Gln196, Gly216, and Arg217. The active-site Proton donor is Lys63.

Belongs to the OMP decarboxylase family. Type 1 subfamily. As to quaternary structure, homodimer.

It catalyses the reaction orotidine 5'-phosphate + H(+) = UMP + CO2. It participates in pyrimidine metabolism; UMP biosynthesis via de novo pathway; UMP from orotate: step 2/2. Its function is as follows. Catalyzes the decarboxylation of orotidine 5'-monophosphate (OMP) to uridine 5'-monophosphate (UMP). This Dictyoglomus turgidum (strain DSM 6724 / Z-1310) protein is Orotidine 5'-phosphate decarboxylase.